A 206-amino-acid polypeptide reads, in one-letter code: Potassium-transporting ATPase KdpC subunit (206 aa).

A helical transmembrane segment spans residues 14–34; it reads VLAVFTLFGLGLAYSLIATGI.

It belongs to the KdpC family. The system is composed of three essential subunits: KdpA, KdpB and KdpC.

Its subcellular location is the cell inner membrane. In terms of biological role, part of the high-affinity ATP-driven potassium transport (or Kdp) system, which catalyzes the hydrolysis of ATP coupled with the electrogenic transport of potassium into the cytoplasm. This subunit acts as a catalytic chaperone that increases the ATP-binding affinity of the ATP-hydrolyzing subunit KdpB by the formation of a transient KdpB/KdpC/ATP ternary complex. In Xanthomonas axonopodis pv. citri (strain 306), this protein is Potassium-transporting ATPase KdpC subunit.